A 227-amino-acid polypeptide reads, in one-letter code: uncharacterized protein (227 aa).

2 helical membrane-spanning segments follow: residues 113-133 and 141-161; these read IMLILMILSMILIIPLFFIVF and FGICLTLLFYIAIFILTNGLI.

Its subcellular location is the membrane. This is an uncharacterized protein from Dictyostelium discoideum (Social amoeba).